A 179-amino-acid polypeptide reads, in one-letter code: Large ribosomal subunit protein uL5 (179 aa).

Contacts the P site tRNA. Forms a bridge to the 30S subunit in the 70S ribosome. Part of the 50S ribosomal subunit. Part of the 5S rRNA/L5/L18 subcomplex; in this organism only 2 proteins, L5 and L18 have been shown to be part of the 5S rRNA subcomplex, unlike E.coli and T.thermophilus where L25 (TL5) is also found. Has been shown to bind 5S rRNA.

Functionally, this is one of the proteins that bind and probably mediate the attachment of the 5S RNA into the large ribosomal subunit, where it forms part of the central protuberance. In the 70S ribosome it contacts protein S13 of the 30S subunit (bridge B1b), connecting the 2 subunits; this bridge is implicated in subunit movement. Contacts the P site tRNA; the 5S rRNA and some of its associated proteins might help stabilize positioning of ribosome-bound tRNAs. This Geobacillus stearothermophilus (Bacillus stearothermophilus) protein is Large ribosomal subunit protein uL5 (rplE).